A 563-amino-acid chain; its full sequence is Arginine--tRNA ligase (563 aa).

The 'HIGH' region signature appears at 120–130; the sequence is PNIAKPFHIGH.

It belongs to the class-I aminoacyl-tRNA synthetase family. Monomer.

The protein resides in the cytoplasm. The enzyme catalyses tRNA(Arg) + L-arginine + ATP = L-arginyl-tRNA(Arg) + AMP + diphosphate. The sequence is that of Arginine--tRNA ligase from Clostridium botulinum (strain ATCC 19397 / Type A).